A 392-amino-acid polypeptide reads, in one-letter code: Protein O-glucosyltransferase 1 (392 aa).

The N-terminal stretch at 1–23 (MERRAGSRLRAWMLLLLLCPVQG) is a signal peptide. 4 cysteine pairs are disulfide-bonded: C49-C56, C54-C357, C102-C108, and C263-C286. N53 carries N-linked (GlcNAc...) asparagine glycosylation. The segment at 103 to 107 (MFPSR) is interaction with the consensus sequence C-X-S-X-[PA]-C in peptide substrates. D133 serves as the catalytic Proton donor/acceptor. The interval 172-178 (AVWPLYP) is interaction with the consensus sequence C-X-S-X-[PA]-C in peptide substrates. Residue Y177 participates in UDP-alpha-D-glucose binding. N204 is a glycosylation site (N-linked (GlcNAc...) asparagine). UDP-alpha-D-glucose-binding positions include S212, R218, and 274–279 (VAASFR). An N-linked (GlcNAc...) asparagine glycan is attached at N373. The short motif at 389–392 (KTEL) is the Prevents secretion from ER element.

It belongs to the glycosyltransferase 90 family. In terms of tissue distribution, widely expressed in newborn and adult tissues (at protein level).

Its subcellular location is the endoplasmic reticulum lumen. It carries out the reaction L-seryl-[EGF-like domain protein] + UDP-alpha-D-xylose = 3-O-(beta-D-xylosyl)-L-seryl-[EGF-like domain protein] + UDP + H(+). The enzyme catalyses L-seryl-[EGF-like domain protein] + UDP-alpha-D-glucose = 3-O-(beta-D-glucosyl)-L-seryl-[EGF-like domain protein] + UDP + H(+). Its pathway is protein modification; protein glycosylation. Its function is as follows. Dual specificity glycosyltransferase that catalyzes the transfer of glucose and xylose from UDP-glucose and UDP-xylose, respectively, to a serine residue found in the consensus sequence of C-X-S-X-P-C. Specifically targets extracellular EGF repeats of protein such as CRB2, F7, F9 and NOTCH2. Acts as a positive regulator of Notch signaling by mediating O-glucosylation of Notch, leading to regulate muscle development. Notch glucosylation does not affect Notch ligand binding. Required during early development to promote gastrulation: acts by mediating O-glucosylation of CRB2, which is required for CRB2 localization to the cell membrane. In Mus musculus (Mouse), this protein is Protein O-glucosyltransferase 1.